The chain runs to 87 residues: Putative defensin-like protein 238 (87 aa).

The N-terminal stretch at 1–23 (MRSITWFIVFCVFMFIALNHVKG) is a signal peptide. Intrachain disulfides connect Cys-30–Cys-87, Cys-40–Cys-65, Cys-48–Cys-78, and Cys-63–Cys-80.

The protein belongs to the DEFL family.

The protein localises to the secreted. In Arabidopsis thaliana (Mouse-ear cress), this protein is Putative defensin-like protein 238 (SCRL16).